Here is a 517-residue protein sequence, read N- to C-terminus: Beclin-1-like protein (517 aa).

A disordered region spans residues 76–106; the sequence is LPRHKPPQSQGIPPRPRGASSPQPDATQSGK. Polar residues predominate over residues 95-105; it reads SSPQPDATQSG. A coiled-coil region spans residues 172–266; the sequence is CLECMRVLSD…NRFNELEDRY (95 aa).

This sequence belongs to the beclin family. Component of a phosphatidylinositol 3-kinase (PI3K) complex composed of ATG6, SH3P2 and FREE1. Interacts with SINAT1, SINAT2, SINAT5, SINAT6, TRAF1A and TRAF1B. Interacts with TUBB8/TUB8. Component of a complex made of VPS38/USL1 and PI3K main subunits such as VPS15, ATG6/VPS30 and VPS34. Binds directly to VPS38/USL1. In terms of processing, ubiquitinated. The interaction with SINAT1 or SINAT2, and the presence of TRAF1A/MUSE14 and TRAF1B/MUSE13, mediates its proteasome-dependent degradation. In terms of tissue distribution, highly expressed in mature pollen grains. Expressed in roots, leaves, stems, flowers and siliques.

The protein resides in the cytoplasm. Its subcellular location is the cytoskeleton. Required for normal plant development. Required for pollen germination. Required for autophagic activity. Required to limit the pathogen-associated cell death response. May be involved in vacuolar protein sorting. Binds to microtubules. May facilitate efficient recruitment of other ATG proteins to assemble scaffolds for autophagosome biogenesis. This chain is Beclin-1-like protein, found in Arabidopsis thaliana (Mouse-ear cress).